The chain runs to 824 residues: RelA-associated inhibitor (824 aa).

The residue at position 1 (Met1) is an N-acetylmethionine. Disordered regions lie at residues 48 to 87 and 99 to 271; these read SLWSDSPAPPGAQAGVPSRMARYSTSPVPEHFGSRGSPQK and RSES…YERL. Phosphoserine occurs at positions 84, 100, 102, 110, 113, 119, and 120. At Thr123 the chain carries Phosphothreonine. Ser134 carries the post-translational modification Phosphoserine. Omega-N-methylarginine is present on residues Arg137, Arg142, Arg144, Arg160, Arg167, and Arg180. Phosphoserine occurs at positions 183, 187, and 203. Residue Arg205 is modified to Omega-N-methylarginine. Thr275 carries the phosphothreonine modification. Ser279 is subject to Phosphoserine. 2 disordered regions span residues 291–370 and 388–501; these read SLDG…RPIP and RAVL…QTVP. A Phosphothreonine modification is found at Thr307. 3 positions are modified to phosphoserine: Ser315, Ser331, and Ser338. Thr340 bears the Phosphothreonine mark. The segment covering 359–370 has biased composition (low complexity); sequence QPRSTPRQRPIP. Over residues 400-424 the composition is skewed to pro residues; the sequence is APPPKLPPQPPPQPQMQPQPQPQPQ. Residues 425–440 are compositionally biased toward low complexity; that stretch reads MQPQSQAQPQTPAPQQ. Phosphoserine occurs at positions 522, 563, and 593. The interval 547–614 is disordered; it reads FHRHGGPGPG…SVLRKVGSPR (68 aa). A compositionally biased stretch (pro residues) spans 575–597; the sequence is PPAPAPPAPIPPPAPPQSSPPEQ. ANK repeat units follow at residues 655–684 and 688–717; these read EGITALHNAICGANYPIVDFLIAAGANVNS and HGWTPLHCAASCNDTAICTALVQHGAAIFA. The SH3 domain maps to 754-816; the sequence is MHNGVVYALW…PRNYFGLFPR (63 aa).

Belongs to the iASPP family. In terms of assembly, interacts with TP63 and TP73. Interacts with RELA NF-kappa-B subunit and with SP1 via its C-terminal part. Interacts (via SH3 domain and ANK repeats) with p53/TP53; the interaction inhibits pro-apoptotic activity of p53/TP53. As to expression, most abundant in skin with high levels also found in heart, testis and stomach. In 15.5 dpc embryonic heart, expressed at higher levels in atria than ventricles.

It is found in the cytoplasm. The protein resides in the nucleus. Its function is as follows. Regulator that plays a central role in regulation of apoptosis and transcription via its interaction with NF-kappa-B and p53/TP53 proteins. Inhibits p53/TP53 function, possibly by preventing the association between p53/TP53 and ASPP1 or ASPP2, and therefore suppressing the subsequent activation of apoptosis. Is involved in NF-kappa-B dependent negative regulation of inflammatory response. The protein is RelA-associated inhibitor of Mus musculus (Mouse).